We begin with the raw amino-acid sequence, 632 residues long: Epithelial sodium channel subunit alpha (632 aa).

Over 1–49 (MTKEEKNEKEALIEFFSSYRELFEFFCSNTTIHGAIRLVCSRRNRMKTA) the chain is Cytoplasmic. A helical transmembrane segment spans residues 50–70 (FWLVLFLVTFGLMYWQFGLLF). Topologically, residues 71–520 (GQYFSYPVSI…SQWSLWFGSS (450 aa)) are extracellular. 10 disulfides stabilise this stretch: Cys-97/Cys-264, Cys-189/Cys-196, Cys-241/Cys-248, Cys-355/Cys-440, Cys-377/Cys-417, Cys-377/Cys-436, Cys-381/Cys-432, Cys-390/Cys-417, Cys-390/Cys-440, and Cys-392/Cys-406. Residues 521–541 (VLSVVEMLELVIDFVIIGVMI) traverse the membrane as a helical segment. Topologically, residues 542 to 632 (LLHRYYYKKA…YYEENGGRRN (91 aa)) are cytoplasmic. The segment covering 612–622 (SRSSSMRSNRS) has biased composition (low complexity). Residues 612-632 (SRSSSMRSNRSYYEENGGRRN) are disordered. Basic and acidic residues predominate over residues 623-632 (YYEENGGRRN).

Belongs to the amiloride-sensitive sodium channel (TC 1.A.6) family. SCNN1A subfamily. Heterotrimer; containing an alpha/SCNN1A, a beta/SCNN1B and a gamma/SCNN1G subunit. Interacts with shroom1.

The protein localises to the apical cell membrane. Its subcellular location is the cell projection. The protein resides in the cilium. It localises to the cytoplasmic granule. It is found in the cytoplasm. The protein localises to the cytoplasmic vesicle. Its subcellular location is the secretory vesicle. The protein resides in the acrosome. It localises to the flagellum. The catalysed reaction is Na(+)(in) = Na(+)(out). Originally identified and characterized by its inhibition by the diuretic drug amiloride. In terms of biological role, this is one of the three pore-forming subunits of the heterotrimeric epithelial sodium channel (ENaC), a critical regulator of sodium balance and fluid homeostasis. ENaC operates in epithelial tissues, where it mediates the electrodiffusion of sodium ions from extracellular fluid through the apical membrane of cells, with water following osmotically. It plays a key role in maintaining sodium homeostasis through electrogenic sodium reabsorption in the kidneys. This Xenopus laevis (African clawed frog) protein is Epithelial sodium channel subunit alpha.